We begin with the raw amino-acid sequence, 572 residues long: Squalene synthase (572 aa).

The next 2 helical transmembrane spans lie at 316–336 and 492–512; these read SVFNFCAIPQVMAIATLELMF and FFLIILVGMVTFMGIVALITW.

The protein belongs to the phytoene/squalene synthase family. As to quaternary structure, monomer. The cofactor is Mg(2+).

The protein resides in the endoplasmic reticulum membrane. It catalyses the reaction 2 (2E,6E)-farnesyl diphosphate + NADPH + H(+) = squalene + 2 diphosphate + NADP(+). It carries out the reaction 2 (2E,6E)-farnesyl diphosphate + NADH + H(+) = squalene + 2 diphosphate + NAD(+). Its pathway is terpene metabolism; lanosterol biosynthesis; lanosterol from farnesyl diphosphate: step 1/3. In terms of biological role, catalyzes the condensation of 2 two farnesyl pyrophosphate moieties to form squalene. It is the first committed enzyme of the sterol biosynthesis pathway. Required for the biosynthesis of ergosterol. The protein is Squalene synthase (ERG9) of Mycosarcoma maydis (Corn smut fungus).